The sequence spans 485 residues: Tektin-5 (485 aa).

Coiled-coil stretches lie at residues 113-185 (SRLT…EVNC), 225-251 (QQQM…ALER), 342-385 (FNAR…MAKE), and 423-443 (DDTL…LQLL).

Belongs to the tektin family. As to quaternary structure, microtubule inner protein component of sperm flagellar doublet microtubules. Interacts with TEKT3. In terms of processing, ubiquitinated, leading to its degradation. Deubiquitinated by USP16, promoting its stability.

The protein resides in the cytoplasm. Its subcellular location is the cytoskeleton. The protein localises to the flagellum axoneme. Functionally, sperm-specific microtubule inner protein (MIP) part of the dynein-decorated doublet microtubules (DMTs) in flagellar axoneme. Forms an extensive interaction network in different conformations that reinforces the helix bundle composed by other tektin proteins (TEKT1 to TEKT4) and MIPs to anchor the tektin bundle onto the tubulin wall of A-tubule of the sperm flagellum. The polypeptide is Tektin-5 (TEKT5) (Macaca fascicularis (Crab-eating macaque)).